Here is a 186-residue protein sequence, read N- to C-terminus: Ribosome-recycling factor (186 aa).

The protein belongs to the RRF family.

Its subcellular location is the cytoplasm. In terms of biological role, responsible for the release of ribosomes from messenger RNA at the termination of protein biosynthesis. May increase the efficiency of translation by recycling ribosomes from one round of translation to another. In Polaromonas sp. (strain JS666 / ATCC BAA-500), this protein is Ribosome-recycling factor.